The primary structure comprises 362 residues: Neisseria adhesin A (362 aa).

Positions 1–23 are cleaved as a signal peptide; sequence MKHFPSKVLTTAILATFCSGALA. Positions 24–169 are head domain; the sequence is ATSDDDVKKA…NIVKIDEKLE (146 aa). 2 coiled-coil regions span residues 90–146 and 183–288; these read VTNL…LNKL and NDIA…KETR. Positions 170–307 are coiled stalk domain; the sequence is AVADTVDKHA…SGLFQPYNVG (138 aa). Transmembrane regions (beta stranded) follow at residues 307 to 317, 321 to 332, 339 to 345, and 351 to 362; these read GRFNVTAAVGG, ESAVAIGTGFRF, KAGVAVG, and SAAYHVGVNYEW. A translocator domain region spans residues 308–362; that stretch reads RFNVTAAVGGYKSESAVAIGTGFRFTENFAAKAGVAVGTSSGSSAAYHVGVNYEW.

This sequence belongs to the autotransporter-2 (AT-2) (TC 1.B.40) family. In terms of assembly, forms high molecular weight oligomers in whole cell extracts that are not disrupted by boiling in SDS buffer. Homotrimer. A fragment containing the N-terminal half of the mature protein (residues 24-210, head domain plus part of the stalk) binds human integrin beta-1 (ITGB1). It was not seen to bind immobilized purified CEACAMs 1, 3, 5, 6 or 8 nor commercially prepared type I collagen, fibronectin or matrigel.

It is found in the cell surface. It localises to the cell outer membrane. Functionally, adheres to and induces bacterial uptake by human epithelial cells. Upon expression in engineered Y.enterocolitica confers an 11- to 15-fold increase in bacterial adherence and uptake by human epithelial cell lines; part of the uptake is mediated by integrin beta-1 (ITGB1) suggesting it may be a human receptor for NadA. A bacterial cell surface protein; antisera against this protein induce complement-mediated killing of this and other strains. This is Neisseria adhesin A from Neisseria meningitidis serogroup B (strain ATCC BAA-335 / MC58).